The sequence spans 345 residues: S-adenosylmethionine:tRNA ribosyltransferase-isomerase (345 aa).

The protein belongs to the QueA family. As to quaternary structure, monomer.

It localises to the cytoplasm. It carries out the reaction 7-aminomethyl-7-carbaguanosine(34) in tRNA + S-adenosyl-L-methionine = epoxyqueuosine(34) in tRNA + adenine + L-methionine + 2 H(+). It participates in tRNA modification; tRNA-queuosine biosynthesis. In terms of biological role, transfers and isomerizes the ribose moiety from AdoMet to the 7-aminomethyl group of 7-deazaguanine (preQ1-tRNA) to give epoxyqueuosine (oQ-tRNA). This Finegoldia magna (strain ATCC 29328 / DSM 20472 / WAL 2508) (Peptostreptococcus magnus) protein is S-adenosylmethionine:tRNA ribosyltransferase-isomerase.